A 743-amino-acid chain; its full sequence is Putative pre-mRNA-splicing factor ATP-dependent RNA helicase DHX32 (743 aa).

Methionine 1 is subject to N-acetylmethionine. The segment at 1–28 is disordered; that stretch reads MEEEGLECPNSSSEKRYFPESLDSSDGD. Residues 72–238 form the Helicase ATP-binding domain; sequence MENLLQNQIV…YGNVPVIEVK (167 aa). 85-92 provides a ligand contact to ATP; the sequence is GDAKCGKS. Residues 185-188 carry the DEAH box motif; it reads DDIH.

It belongs to the DEAD box helicase family. DEAH subfamily. In terms of tissue distribution, expressed in lymphoid tissues (at protein level). Expressed in brain, heart, skeletal muscle, colon, thymus, spleen, kidney, liver, small intestine, placenta, lung, lymphoid tissues and blood leukocytes.

Its subcellular location is the nucleus. The protein localises to the mitochondrion. The catalysed reaction is ATP + H2O = ADP + phosphate + H(+). The polypeptide is Putative pre-mRNA-splicing factor ATP-dependent RNA helicase DHX32 (DHX32) (Homo sapiens (Human)).